The chain runs to 387 residues: Homoserine O-succinyltransferase (387 aa).

The AB hydrolase-1 domain maps to 45–354 (NAVLVCHALN…DAPHGHDAFL (310 aa)). Ser-151 functions as the Nucleophile in the catalytic mechanism. Position 221 (Arg-221) interacts with substrate. Catalysis depends on residues Asp-317 and His-350. Asp-351 is a binding site for substrate.

This sequence belongs to the AB hydrolase superfamily. MetX family. As to quaternary structure, homodimer.

The protein localises to the cytoplasm. The enzyme catalyses L-homoserine + succinyl-CoA = O-succinyl-L-homoserine + CoA. It functions in the pathway amino-acid biosynthesis; L-methionine biosynthesis via de novo pathway; O-succinyl-L-homoserine from L-homoserine: step 1/1. In terms of biological role, transfers a succinyl group from succinyl-CoA to L-homoserine, forming succinyl-L-homoserine. This Methylibium petroleiphilum (strain ATCC BAA-1232 / LMG 22953 / PM1) protein is Homoserine O-succinyltransferase.